The sequence spans 146 residues: MGRFIFLSFGLLVVFLSLSGTGADCPSGWSSYEGHCYKPFNEQKNWADAENFCTQQHTGGHLVSFHSTEEADFVVKLAFQNFGHGIFWMGLSNVWNQCSWQWSSAAKLKYEAWAEESYCVYFKSTNNKWRSRACRMEAYFVCEFQA.

The signal sequence occupies residues 1 to 23 (MGRFIFLSFGLLVVFLSLSGTGA). Disulfide bonds link C25/C36, C53/C142, and C119/C134. The C-type lectin domain occupies 32 to 143 (YEGHCYKPFN…CRMEAYFVCE (112 aa)). The Ca(2+) site is built by S64 and E70. E143 is a binding site for Ca(2+).

This sequence belongs to the snaclec family. As to quaternary structure, heterodimer with subunit A of IX/X-bp or IX-bp; disulfide-linked. As to expression, expressed by the venom gland.

It localises to the secreted. When linked to subunit A of IX/X-bp, anticoagulant protein which binds to the gamma-carboxyglutamic acid-domain regions of factors IX (F9) and factor X (F10) in the presence of calcium with a 1 to 1 stoichiometry. Functionally, when linked to subunit A of IX-bp, anticoagulant protein which binds to the gamma-carboxyglutamic acid-domain regions of factor IX (but not to factor X) in the presence of calcium with a 1 to 1 stoichiometry. The sequence is that of Snaclec coagulation factor IX/factor X-binding protein subunit B from Gloydius halys (Chinese water mocassin).